The sequence spans 341 residues: Eukaryotic translation initiation factor 2 subunit 1 (341 aa).

One can recognise an S1 motif domain in the interval 18–89 (NELVMVRIES…DKGYIDLSKR (72 aa)). Positions 301 to 341 (LMEQLEVENQDGDGEEHEDDDDDDDDEEEEEKPKEKKSSRK) are disordered. Positions 303 to 330 (EQLEVENQDGDGEEHEDDDDDDDDEEEE) are enriched in acidic residues. A compositionally biased stretch (basic and acidic residues) spans 331-341 (EKPKEKKSSRK).

The protein belongs to the eIF-2-alpha family. Eukaryotic translation initiation factor 2 eIF2 is a heterotrimeric complex composed of an alpha, a beta and a gamma subunit.

It localises to the cytoplasm. It is found in the cytosol. Functionally, eIF-2 functions in the early steps of protein synthesis by forming a ternary complex with GTP and initiator tRNA. This complex binds to a 40S ribosomal subunit, followed by mRNA binding to form a 43S pre-initiation complex. Junction of the 60S ribosomal subunit to form the 80S initiation complex is preceded by hydrolysis of the GTP bound to eIF-2 and release of an eIF-2-GDP binary complex. In order for eIF-2 to recycle and catalyze another round of initiation, the GDP bound to eIF-2 must exchange with GTP by way of a reaction catalyzed by eIF2B. This is Eukaryotic translation initiation factor 2 subunit 1 (eif2s1) from Dictyostelium discoideum (Social amoeba).